The following is a 257-amino-acid chain: Pyridoxine 5'-phosphate synthase (257 aa).

A 3-amino-2-oxopropyl phosphate-binding site is contributed by Asn16. 18–19 (DH) is a 1-deoxy-D-xylulose 5-phosphate binding site. Arg27 serves as a coordination point for 3-amino-2-oxopropyl phosphate. His52 (proton acceptor) is an active-site residue. 1-deoxy-D-xylulose 5-phosphate is bound by residues Arg54 and His59. Glu79 acts as the Proton acceptor in catalysis. Position 109 (Thr109) interacts with 1-deoxy-D-xylulose 5-phosphate. The active-site Proton donor is His200. Residues Gly201 and 222-223 (GH) each bind 3-amino-2-oxopropyl phosphate.

This sequence belongs to the PNP synthase family. Homooctamer; tetramer of dimers.

It localises to the cytoplasm. The catalysed reaction is 3-amino-2-oxopropyl phosphate + 1-deoxy-D-xylulose 5-phosphate = pyridoxine 5'-phosphate + phosphate + 2 H2O + H(+). Its pathway is cofactor biosynthesis; pyridoxine 5'-phosphate biosynthesis; pyridoxine 5'-phosphate from D-erythrose 4-phosphate: step 5/5. Its function is as follows. Catalyzes the complicated ring closure reaction between the two acyclic compounds 1-deoxy-D-xylulose-5-phosphate (DXP) and 3-amino-2-oxopropyl phosphate (1-amino-acetone-3-phosphate or AAP) to form pyridoxine 5'-phosphate (PNP) and inorganic phosphate. The protein is Pyridoxine 5'-phosphate synthase of Burkholderia pseudomallei (strain K96243).